The sequence spans 728 residues: Procollagen-lysine,2-oxoglutarate 5-dioxygenase 1 (728 aa).

Positions Met1 to Ala18 are cleaved as a signal peptide. N-linked (GlcNAc...) asparagine glycosylation is found at Asn198 and Asn539. The 92-residue stretch at Gln637–Pro728 folds into the Fe2OG dioxygenase domain. His657 and Asp659 together coordinate Fe cation. An N-linked (GlcNAc...) asparagine glycan is attached at Asn687. Fe cation is bound at residue His709. The active site involves Arg719.

In terms of assembly, homodimer. Identified in a complex with P3H3 and P3H4. It depends on Fe(2+) as a cofactor. The cofactor is L-ascorbate. As to expression, highly expressed in the liver, heart, lung, skeletal muscle and kidney.

It is found in the rough endoplasmic reticulum membrane. The catalysed reaction is L-lysyl-[collagen] + 2-oxoglutarate + O2 = (5R)-5-hydroxy-L-lysyl-[collagen] + succinate + CO2. Its function is as follows. Part of a complex composed of PLOD1, P3H3 and P3H4 that catalyzes hydroxylation of lysine residues in collagen alpha chains and is required for normal assembly and cross-linkling of collagen fibrils. Forms hydroxylysine residues in -Xaa-Lys-Gly- sequences in collagens. These hydroxylysines serve as sites of attachment for carbohydrate units and are essential for the stability of the intermolecular collagen cross-links. This is Procollagen-lysine,2-oxoglutarate 5-dioxygenase 1 (Plod1) from Mus musculus (Mouse).